The primary structure comprises 665 residues: LisH domain-containing protein ARMC9 (665 aa).

Residues 7 to 39 (HESELLGLVKEYLDFAEFEDTLKTFLKECKIKG) form the LisH domain. Positions 204 to 235 (QSNKDVLQQLHQQLVEAERRSMTYLKRYNRIQ) form a coiled coil. Ser-582 is modified (phosphoserine). Positions 582–603 (SDDDEDEDDEEDHDTMEADLDK) are enriched in acidic residues. Disordered regions lie at residues 582–604 (SDDD…LDKD) and 636–665 (RRGT…GYPA).

As to quaternary structure, interacts with TOGARAM1, CCDC66, CEP104, CSPP1 and CEP290. Interacts with NDUFAF2.

It localises to the cytoplasm. Its subcellular location is the cytoskeleton. The protein resides in the cilium basal body. It is found in the cell projection. The protein localises to the cilium. It localises to the microtubule organizing center. Its subcellular location is the centrosome. The protein resides in the centriole. Its function is as follows. Involved in ciliogenesis. It is required for appropriate acetylation and polyglutamylation of ciliary microtubules, and regulation of cilium length. Acts as a positive regulator of hedgehog (Hh)signaling. May participate in the trafficking and/or retention of GLI2 and GLI3 proteins at the ciliary tip. The chain is LisH domain-containing protein ARMC9 (ARMC9) from Bos taurus (Bovine).